The primary structure comprises 371 residues: Cytochrome b (371 aa).

The next 4 helical transmembrane spans lie at 25 to 45, 69 to 90, 105 to 125, and 170 to 190; these read FGSM…FLAV, WMMQ…YTHI, WLSG…GYVL, and FFAL…LHIM. Heme b contacts are provided by His-75 and His-89. Heme b is bound by residues His-174 and His-188. Position 193 (His-193) interacts with a ubiquinone. The next 4 helical transmembrane spans lie at 218-238, 280-300, 312-332, and 339-358; these read YKDM…VAFF, LGGA…PFTH, IMQL…WAAT, and FTTI…ITNP.

This sequence belongs to the cytochrome b family. As to quaternary structure, the cytochrome bc1 complex contains 3 respiratory subunits (MT-CYB, CYC1 and UQCRFS1), 2 core proteins (UQCRC1 and UQCRC2) and probably 6 low-molecular weight proteins. It depends on heme b as a cofactor.

The protein resides in the mitochondrion inner membrane. In terms of biological role, component of the ubiquinol-cytochrome c reductase complex (complex III or cytochrome b-c1 complex) that is part of the mitochondrial respiratory chain. The b-c1 complex mediates electron transfer from ubiquinol to cytochrome c. Contributes to the generation of a proton gradient across the mitochondrial membrane that is then used for ATP synthesis. This is Cytochrome b (MT-CYB) from Eryx colubrinus colubrinus.